Consider the following 550-residue polypeptide: Hydroxylamine reductase (550 aa).

[4Fe-4S] cluster is bound by residues Cys-7, Cys-10, Cys-19, and Cys-25. Hybrid [4Fe-2O-2S] cluster contacts are provided by His-244, Glu-268, Cys-312, Cys-405, Cys-433, Cys-458, Glu-493, and Lys-495. Cys-405 carries the post-translational modification Cysteine persulfide.

The protein belongs to the HCP family. [4Fe-4S] cluster serves as cofactor. It depends on hybrid [4Fe-2O-2S] cluster as a cofactor.

It localises to the cytoplasm. The catalysed reaction is A + NH4(+) + H2O = hydroxylamine + AH2 + H(+). Catalyzes the reduction of hydroxylamine to form NH(3) and H(2)O. This chain is Hydroxylamine reductase, found in Porphyromonas gingivalis (strain ATCC BAA-308 / W83).